The sequence spans 202 residues: Putative 3-methyladenine DNA glycosylase (202 aa).

It belongs to the DNA glycosylase MPG family.

The sequence is that of Putative 3-methyladenine DNA glycosylase from Alkaliphilus oremlandii (strain OhILAs) (Clostridium oremlandii (strain OhILAs)).